The primary structure comprises 1040 residues: MQVLPPSSTGGPSRLFIMRPVATTLLMVAILLAGIIGYRALPVSALPEVDYPTIQVVTLYPGASPDVMTSAVTAPLERQFGQMSGLKQMSSQSSGGASVITLQFQLTLPLDVAEQEVQAAINAATNLLPSDLPNPPVYSKVNPADPPIMTLAVTSTAMPMTQVEDMVETRVAQKISQISGVGLVTLSGGQRPAVRVKLNAQAIAALGLTSETVRTAITGANVNSAKGSLDGPSRAVTLSANDQMQSAEEYRQLIIAYQNGAPIRLGDVATVEQGAENSWLGAWANKEQAIVMNVQRQPGANIISTADSIRQMLPQLTESLPKSVKVTVLSDRTTNIRASVNDTQFELMMAIALVVMIIYLFLRNIPATIIPGFAVPLSLIGTFAVMVFLDFSINNLTLMALTIATGFVVDDAIVVIENISRYIEKGEKPLAAALKGAGEIGFTIISLTFSLIAVLIPLLFMGDIVGRLFREFAITLAVAILISAVVSLTLTPMMCARMLSQESLRKQNRFSRASEKMFDRIIAAYGRGLAKVLNHPWLTLSVALSTLLLSVLLWVFIPKGFFPVQDNGIIQGTLQAPQSSSFANMAQRQRQVADVILQDPAVQSLTSFVGVDGTNPSLNSARLQINLKPLDERDDRVQKVIARLQTAVDKVPGVDLFLQPTQDLTIDTQVSRTQYQFTLQATSLDALSTWVPELMEKLQQLPQLSDVSSDWQDKGLVAYVNVDRDSASRLGISMADVDNALYNAFGQRLISTIYTQANQYRVVLEHNTENTPGLAALDTIRLTSSDGGVVPLSSIAKIEQRFAPLSINHLDQFPVTTISFNVPDNYSLGDAVQAIMDTEKTLNLPVDITTQFQGSTLAFQSALGSTVWLIVAAVVAMYIVLGILYESFIHPITILSTLPTAGVGALLALMIAGSELDVIAIIGIILLIGIVKKNAIMMIDFALAAEREQGMSPRDAIYQACLLRFRPILMTTLAALLGALPLMLSTGVGAELRRPLGIGMVGGLIVSQVLTLFTTPVIYLLFDRLALWTKSRFARHEEEA.

12 helical membrane passes run 16 to 36, 347 to 367, 369 to 389, 396 to 416, 440 to 460, 472 to 492, 537 to 557, 863 to 883, 888 to 908, 911 to 931, 968 to 988, and 998 to 1018; these read FIMR…AGII, LMMA…NIPA, IIPG…MVFL, LTLM…IVVI, IGFT…PLLF, FAIT…TLTP, WLTL…WVFI, LGST…VLGI, FIHP…ALLA, IAGS…IGIV, ILMT…STGV, and IGMV…TPVI.

The protein belongs to the resistance-nodulation-cell division (RND) (TC 2.A.6) family. MdtB subfamily. As to quaternary structure, part of a tripartite efflux system composed of MdtA, MdtB and MdtC. MdtB forms a heteromultimer with MdtC.

Its subcellular location is the cell inner membrane. In terms of biological role, the MdtABC tripartite complex confers resistance against novobiocin and deoxycholate. In Escherichia coli O8 (strain IAI1), this protein is Multidrug resistance protein MdtB.